Here is a 354-residue protein sequence, read N- to C-terminus: MGPVSLLPKYQKLNTWNGDLAKMTHLQAGLSPETIEKARLELNENPDILHQDIQQVRDMIITRPDIGFLRTDDAFILRFLRARKFHQADAFRLLAQYFQYRQLNLDMFKNFKADDPGIKRALIDGFPGVLENRDHYGRKILLLFAANWDQSRNSFTDILRAILLSLEVLIEDPELQINGFILIIDWSNFSFKQASKLTPSILKLAIEGLQDSFPARFGGVHFVNQPWYIHALYTLIKPFLKDKTRKRIFLHGNNLNSLHQLIHPEFLPSEFGGTLPPYDMGTWARTLLGPDYSDENDYTHTSYNAMHVKHTSSNLERECSPKLMKRSQSVVEAGTLKHEEKGENENTQPLLALD.

One can recognise a CRAL-TRIO domain in the interval I118–D279. Residues A333 to D354 are disordered. The span at T335–N344 shows a compositional bias: basic and acidic residues. A compositionally biased stretch (polar residues) spans E345–D354.

In terms of assembly, forms a complex with clathrin heavy chain and gamma-adaptin.

It is found in the golgi apparatus. It localises to the trans-Golgi network membrane. The protein resides in the early endosome membrane. The protein localises to the cytoplasmic vesicle. Its subcellular location is the clathrin-coated vesicle. Its function is as follows. Required for normal morphology of late endosomes and/or lysosomes in neurons. Binds phosphatidylinositol 3,5-bisphosphate (PtdIns(3,5)P2). The protein is Clavesin-1 (CLVS1) of Pongo abelii (Sumatran orangutan).